The chain runs to 140 residues: Large ribosomal subunit protein bL17 (140 aa).

It belongs to the bacterial ribosomal protein bL17 family. In terms of assembly, part of the 50S ribosomal subunit. Contacts protein L32.

The protein is Large ribosomal subunit protein bL17 of Methylobacterium nodulans (strain LMG 21967 / CNCM I-2342 / ORS 2060).